Consider the following 1172-residue polypeptide: Lysylphosphatidylglycerol biosynthesis bifunctional protein LysX (1172 aa).

Positions 1–34 (MGLHLTVPGLRRDGRGVQSNSHDTSSKTTADISR) are disordered. The interval 1-663 (MGLHLTVPGL…LLHHDGSAPD (663 aa)) is phosphatidylglycerol lysyltransferase. Residues 17–31 (VQSNSHDTSSKTTAD) show a composition bias toward polar residues. The next 7 helical transmembrane spans lie at 80–100 (VPAAAGWTVGVIATLSLLASV), 122–142 (FPDTNFAWSFVLALLAAALTA), 146–166 (IAWLVLLANMVLAAVVNAAEI), 177–197 (FGENLGFAVHVVAIVVLVLGY), 214–234 (AVWLAGAVVGIVASWGLVELF), 272–292 (AIFGLFGAFALIGAAIVLFLS), and 612–632 (VIPRVGVASVIAEGFLVLPFS). The lysine--tRNA ligase stretch occupies residues 664 to 1172 (VSGLRQVGLT…TLPFPLAKPH (509 aa)). Positions 726–804 (VSVSGRIMRI…SLIVSGWRLI (79 aa)) form a DNA-binding region, OB. D1084 and E1091 together coordinate Mg(2+).

It in the N-terminal section; belongs to the LPG synthetase family. In the C-terminal section; belongs to the class-II aminoacyl-tRNA synthetase family. It depends on Mg(2+) as a cofactor.

The protein localises to the cell membrane. It carries out the reaction tRNA(Lys) + L-lysine + ATP = L-lysyl-tRNA(Lys) + AMP + diphosphate. The enzyme catalyses L-lysyl-tRNA(Lys) + a 1,2-diacyl-sn-glycero-3-phospho-(1'-sn-glycerol) = a 1,2-diacyl-sn-glycero-3-phospho-1'-(3'-O-L-lysyl)-sn-glycerol + tRNA(Lys). Catalyzes the production of L-lysyl-tRNA(Lys)transfer and the transfer of a lysyl group from L-lysyl-tRNA(Lys) to membrane-bound phosphatidylglycerol (PG), which produces lysylphosphatidylglycerol (LPG), one of the components of the bacterial membrane with a positive net charge. LPG synthesis contributes to the resistance to cationic antimicrobial peptides (CAMPs) and likely protects M.tuberculosis against the CAMPs produced by competiting microorganisms (bacteriocins). In fact, the modification of anionic phosphatidylglycerol with positively charged L-lysine results in repulsion of the peptides. The polypeptide is Lysylphosphatidylglycerol biosynthesis bifunctional protein LysX (lysX) (Mycobacterium bovis (strain BCG / Pasteur 1173P2)).